Reading from the N-terminus, the 625-residue chain is Threonine--tRNA ligase (625 aa).

The tract at residues 1–149 is editing domain; that stretch reads MRVLLIHAKR…RNYEAKTTAR (149 aa). Catalytic stretches follow at residues 197 to 494 and 198 to 494; these read NPVN…PYIP and PVNK…PYIP. Zn(2+) contacts are provided by cysteine 291, histidine 342, and histidine 463.

The protein belongs to the class-II aminoacyl-tRNA synthetase family. Homodimer. Zn(2+) serves as cofactor.

Its subcellular location is the cytoplasm. The catalysed reaction is tRNA(Thr) + L-threonine + ATP = L-threonyl-tRNA(Thr) + AMP + diphosphate + H(+). Its function is as follows. Catalyzes the attachment of threonine to tRNA(Thr) in a two-step reaction: L-threonine is first activated by ATP to form Thr-AMP and then transferred to the acceptor end of tRNA(Thr). Also edits incorrectly charged L-seryl-tRNA(Thr). This Hyperthermus butylicus (strain DSM 5456 / JCM 9403 / PLM1-5) protein is Threonine--tRNA ligase.